The following is a 160-amino-acid chain: Cyclic pyranopterin monophosphate synthase (160 aa).

Residues 77–79 (MCH) and 114–115 (ME) contribute to the substrate site. Aspartate 129 is a catalytic residue.

This sequence belongs to the MoaC family. In terms of assembly, homohexamer; trimer of dimers.

The catalysed reaction is (8S)-3',8-cyclo-7,8-dihydroguanosine 5'-triphosphate = cyclic pyranopterin phosphate + diphosphate. Its pathway is cofactor biosynthesis; molybdopterin biosynthesis. In terms of biological role, catalyzes the conversion of (8S)-3',8-cyclo-7,8-dihydroguanosine 5'-triphosphate to cyclic pyranopterin monophosphate (cPMP). The polypeptide is Cyclic pyranopterin monophosphate synthase (Listeria monocytogenes serotype 4a (strain HCC23)).